The primary structure comprises 518 residues: Transcription factor TT8 (518 aa).

Coiled coils occupy residues 220–240 and 405–428; these read EVHE…MSEE and VNHL…KRTR. The bHLH domain occupies 359 to 408; it reads REDLSHVVAERRRREKLNEKFITLRSMVPFVTKMDKVSILGDTIAYVNHL.

The protein belongs to the bHLH protein family. Homodimer. Interacts with MYB4, MYB5, MYB6, MYB82, MYB113, MYB114, MYB75/PAP1, MYB90/PAP2, and TT2. Buds, flowers and developing siliques, but not in leaves, stems and roots.

The protein localises to the nucleus. Its function is as follows. Transcription activator, when associated with MYB75/PAP1 or MYB90/PAP2. Involved in the control of flavonoid pigmentation. Plays a key role in regulating leucoanthocyanidin reductase (BANYULS) and dihydroflavonol-4-reductase (DFR). Not required for leucoanthocyanidin dioxygenase (LDOX) expression. The chain is Transcription factor TT8 from Arabidopsis thaliana (Mouse-ear cress).